A 471-amino-acid polypeptide reads, in one-letter code: uncharacterized protein (471 aa).

Transmembrane regions (helical) follow at residues Phe48–Val68, Leu85–Leu105, Tyr123–Ala140, Ser145–Tyr165, Val186–Met206, Ser223–Phe243, Phe277–Leu297, Gly320–Leu340, Ile349–Tyr369, Phe379–Leu399, Val414–Phe434, and Val440–Ile460.

The protein belongs to the major facilitator superfamily.

The protein resides in the golgi apparatus. Its subcellular location is the membrane. This is an uncharacterized protein from Schizosaccharomyces pombe (strain 972 / ATCC 24843) (Fission yeast).